We begin with the raw amino-acid sequence, 100 residues long: NADH-quinone oxidoreductase subunit K (100 aa).

A run of 3 helical transmembrane segments spans residues 2–22, 29–49, and 63–83; these read VPTT…MIGV, IMVF…LVAF, and FIVM…IVAI.

Belongs to the complex I subunit 4L family. In terms of assembly, NDH-1 is composed of 15 different subunits. Subunits NuoA, H, J, K, L, M, N constitute the membrane sector of the complex.

The protein localises to the cell membrane. The enzyme catalyses a quinone + NADH + 5 H(+)(in) = a quinol + NAD(+) + 4 H(+)(out). In terms of biological role, NDH-1 shuttles electrons from NADH, via FMN and iron-sulfur (Fe-S) centers, to quinones in the respiratory chain. The immediate electron acceptor for the enzyme in this species is believed to be a menaquinone. Couples the redox reaction to proton translocation (for every two electrons transferred, four hydrogen ions are translocated across the cytoplasmic membrane), and thus conserves the redox energy in a proton gradient. The sequence is that of NADH-quinone oxidoreductase subunit K from Deinococcus deserti (strain DSM 17065 / CIP 109153 / LMG 22923 / VCD115).